The chain runs to 353 residues: uncharacterized protein (353 aa).

The signal sequence occupies residues 1 to 30 (MHLRHLFSPRLRGSLLLGSLLVASSFSTLA).

This is an uncharacterized protein from Salmonella typhi.